We begin with the raw amino-acid sequence, 294 residues long: Indole-3-glycerol phosphate synthase (294 aa).

This sequence belongs to the TrpC family.

It catalyses the reaction 1-(2-carboxyphenylamino)-1-deoxy-D-ribulose 5-phosphate + H(+) = (1S,2R)-1-C-(indol-3-yl)glycerol 3-phosphate + CO2 + H2O. It functions in the pathway amino-acid biosynthesis; L-tryptophan biosynthesis; L-tryptophan from chorismate: step 4/5. The chain is Indole-3-glycerol phosphate synthase from Synechococcus sp. (strain CC9902).